The sequence spans 176 residues: Cytochrome c oxidase subunit 4 isoform 2, mitochondrial (176 aa).

Residues 1–28 (MLRLTAGRVRSLLAGRATAAFSTSSARM) constitute a mitochondrion transit peptide. At 29-106 (ASHDLEVAES…TYSEMKQPSS (78 aa)) the chain is on the mitochondrial matrix side. The chain crosses the membrane as a helical span at residues 107–132 (EWKTVFGGIFIFLGFTGLVVWWQALY). The Mitochondrial intermembrane portion of the chain corresponds to 133–176 (VYPPRPRTFDDEWKAKQLKRMLDMRVNPIEGFSAKWDYEKGQWK).

This sequence belongs to the cytochrome c oxidase IV family. Component of the cytochrome c oxidase (complex IV, CIV), a multisubunit enzyme composed of 14 subunits. The complex is composed of a catalytic core of 3 subunits MT-CO1, MT-CO2 and MT-CO3, encoded in the mitochondrial DNA, and 11 supernumerary subunits COX4I, COX5A, COX5B, COX6A, COX6B, COX6C, COX7A, COX7B, COX7C, COX8 and NDUFA4, which are encoded in the nuclear genome. The complex exists as a monomer or a dimer and forms supercomplexes (SCs) in the inner mitochondrial membrane with NADH-ubiquinone oxidoreductase (complex I, CI) and ubiquinol-cytochrome c oxidoreductase (cytochrome b-c1 complex, complex III, CIII), resulting in different assemblies (supercomplex SCI(1)III(2)IV(1) and megacomplex MCI(2)III(2)IV(2)).

It is found in the mitochondrion inner membrane. The protein operates within energy metabolism; oxidative phosphorylation. Functionally, component of the cytochrome c oxidase, the last enzyme in the mitochondrial electron transport chain which drives oxidative phosphorylation. The respiratory chain contains 3 multisubunit complexes succinate dehydrogenase (complex II, CII), ubiquinol-cytochrome c oxidoreductase (cytochrome b-c1 complex, complex III, CIII) and cytochrome c oxidase (complex IV, CIV), that cooperate to transfer electrons derived from NADH and succinate to molecular oxygen, creating an electrochemical gradient over the inner membrane that drives transmembrane transport and the ATP synthase. Cytochrome c oxidase is the component of the respiratory chain that catalyzes the reduction of oxygen to water. Electrons originating from reduced cytochrome c in the intermembrane space (IMS) are transferred via the dinuclear copper A center (CU(A)) of subunit 2 and heme A of subunit 1 to the active site in subunit 1, a binuclear center (BNC) formed by heme A3 and copper B (CU(B)). The BNC reduces molecular oxygen to 2 water molecules using 4 electrons from cytochrome c in the IMS and 4 protons from the mitochondrial matrix. The sequence is that of Cytochrome c oxidase subunit 4 isoform 2, mitochondrial from Thunnus obesus (Bigeye tuna).